The following is a 418-amino-acid chain: MIQLTATPVSALVDEPVHIRATGLIPFQMVSFQASLEDENGDMFYSQAHYRANEFGEVDLNHASSLGGDYMGVHPMGLFWSLKPEKLLTRLLKRDVMNRPFQVQVKLYDLELIVNNKVASAPKASLTLERWYVAPGVTRIKVREGRLRGALFLPPGEGLFPGVIDLFGGLGGLLEFRASLLASRGFASLALAYHNYEDLPRKPEVTDLEYFEEAANFLLRHPKVFGSGVGVVSVCQGVQIGLSMAIYLKQVTATVLINGTNFPFGIPQVYHGQIHQPLPHSAQLISTNALGLLELYRTFETTQVGASQYLFPIEEAQGQFLFIVGEGDKTINSKAHAEQAIGQLKRHGKNNWTLLSYPGAGHLIEPPYSPLCCASTTHDLRLHWGGEVIPHAAAQEHAWKEIQRFLRKHLIPDVTSQL.

Ser125 is modified (phosphoserine). Residues Cys235, Asp328, and His362 each act as charge relay system in the active site. Ser416 bears the Phosphoserine mark.

The protein belongs to the C/M/P thioester hydrolase family. In terms of assembly, monomer. As to expression, expressed in the gallbladder mucosa and pancreas. Expressed in hepatocytes (at protein level).

Its subcellular location is the cytoplasm. It is found in the cytosol. The protein localises to the peroxisome. It catalyses the reaction choloyl-CoA + glycine = glycocholate + CoA + H(+). The catalysed reaction is hexadecanoyl-CoA + H2O = hexadecanoate + CoA + H(+). It carries out the reaction choloyl-CoA + H2O = cholate + CoA + H(+). The enzyme catalyses chenodeoxycholoyl-CoA + H2O = chenodeoxycholate + CoA + H(+). It catalyses the reaction eicosanoyl-CoA + H2O = eicosanoate + CoA + H(+). The catalysed reaction is octadecanoyl-CoA + H2O = octadecanoate + CoA + H(+). It carries out the reaction docosanoyl-CoA + H2O = docosanoate + CoA + H(+). The enzyme catalyses tetracosanoyl-CoA + H2O = tetracosanoate + CoA + H(+). It catalyses the reaction hexacosanoyl-CoA + H2O = hexacosanoate + CoA + H(+). The catalysed reaction is dodecanoyl-CoA + H2O = dodecanoate + CoA + H(+). It carries out the reaction tetradecanoyl-CoA + H2O = tetradecanoate + CoA + H(+). The enzyme catalyses choloyl-CoA + taurine = taurocholate + CoA + H(+). It catalyses the reaction chenodeoxycholoyl-CoA + glycine = glycochenodeoxycholate + CoA + H(+). The catalysed reaction is chenodeoxycholoyl-CoA + taurine = taurochenodeoxycholate + CoA + H(+). It carries out the reaction eicosanoyl-CoA + glycine = N-eicosanoylglycinate + CoA + H(+). The enzyme catalyses hexacosanoyl-CoA + glycine = N-hexacosanoylglycine + CoA + H(+). It catalyses the reaction docosanoyl-CoA + glycine = N-docosanoylglycine + CoA + H(+). Its function is as follows. Catalyzes the amidation of bile acids (BAs) with the amino acids taurine and glycine. More than 95% of the BAs are N-acyl amidates with glycine and taurine. Amidation of BAs in the liver with glycine or taurine prior to their excretion into bile is an important biochemical event in bile acid metabolism. This conjugation (or amidation) plays several important biological roles in that it promotes the secretion of BAs and cholesterol into bile and increases the detergent properties of BAs in the intestine, which facilitates lipid and vitamin absorption. May also act as an acyl-CoA thioesterase that regulates intracellular levels of free fatty acids. In vitro, catalyzes the hydrolysis of long- and very long-chain saturated acyl-CoAs to the free fatty acid and coenzyme A (CoASH), and conjugates glycine to these acyl-CoAs. The sequence is that of Bile acid-CoA:amino acid N-acyltransferase (BAAT) from Homo sapiens (Human).